A 3704-amino-acid chain; its full sequence is Fatty acid synthase 2 (3704 aa).

The span at 27–41 shows a compositional bias: low complexity; it reads AVSAHGSPPSSASPG. A disordered region spans residues 27 to 52; that stretch reads AVSAHGSPPSSASPGPDDKAFSVDGT. An acetyltransferase (AT) domain region spans residues 216–475; that stretch reads ALFGGQGNNH…QARIPFSKRK (260 aa). Residues 639 to 887 form an enoyl reductase (ER) domain region; sequence SRLLGKPPIM…LIASTQGCSD (249 aa). Residues 1216 to 1709 are dehydratase (DH) domain; the sequence is GEQPSWIRAL…VPGDQLSVQL (494 aa). The MaoC-like domain maps to 1624–1730; sequence PKTNEPYSRA…VQIDASNQRG (107 aa). The malonyl/palmitoyl transferase (MT/PT) domain stretch occupies residues 1747–2112; the sequence is YVFTGQGSQA…IEHVSEVTRS (366 aa). The 79-residue stretch at 2265 to 2343 folds into the Carrier domain; the sequence is DERLDPLLTV…AALRPGYSGE (79 aa). At S2303 the chain carries O-(pantetheine 4'-phosphoryl)serine. The segment at 2733-2969 is ketoreductase (KR) domain; it reads GLDVLLTGVG…LGLVEPEFAS (237 aa). One can recognise a Ketosynthase family 3 (KS3) domain in the interval 3176–3623; the sequence is QQEIELTHDL…QVGGIAMILH (448 aa). Residues C3359, H3506, and H3547 each act as for beta-ketoacyl synthase activity in the active site.

This sequence in the N-terminal section; belongs to the fungal fatty acid synthetase subunit beta family. It in the C-terminal section; belongs to the thiolase-like superfamily. Fungal fatty acid synthetase subunit alpha family.

Its pathway is secondary metabolite biosynthesis. In terms of biological role, fatty acid synthase; part of the gene cluster that mediates the biosynthesis of the glycolipid biosurfactant ustilagic acid (UA). UA is a secreted cellobiose glycolipid that is toxic for many microorganisms and confers biocontrol activity to U.maydis. UA consists of 15,16-dihydroxypalmitic or 2,15,16-trihydroxypalmitic acid, which is O-glycosidically linked to cellobiose at its terminal hydroxyl group. In addition, the cellobiose moiety is acetylated and acylated with a short-chain hydroxy fatty acid. UA biosynthesis starts with omega-hydroxylation of palmitic acid catalyzed by the cytochrome P450 monooxygenase cyp1. Terminal hydroxylation of palmitic acid precedes subterminal hydroxylation catalyzed by the cytochrome P450 monooxygenase cyp2. Sequential glucosylation of the hydroxy fatty acid is probably catalyzed by the glycosyltransferase ugt1. The cellobiose lipid is further decorated by acetylation of the proximal glucose residue and by acylation with a short-chain beta-hydroxy fatty acid at the distal glucose residue. The acyltransferase uat1 may be a good candidate for catalyzing either acetylation or acylation of the cellobiose lipid. The fatty acid synthase fas2 may be involved in synthesis of the carbon backbone of the short-chain beta-hydroxy fatty acid esterified to the cellobiose disaccharide. The secreted UA consists of a mixture of both alpha-hydroxylated and non-hydroxylated glycolipids; therefore, alpha-hydroxylation of the long-chain fatty, catalyzed by the fatty acid hydroxylase ahd1, occurs late in UA biosynthesis and may be the last step before secretion. The protein is Fatty acid synthase 2 of Mycosarcoma maydis (Corn smut fungus).